The following is a 266-amino-acid chain: Hydroxypyruvate/pyruvate aldolase (266 aa).

The active-site Proton acceptor is the His-48. Positions 152 and 178 each coordinate a divalent metal cation.

It belongs to the HpcH/HpaI aldolase family. A divalent metal cation serves as cofactor.

It carries out the reaction D-glyceraldehyde + pyruvate = 2-dehydro-3-deoxy-L-galactonate. It catalyses the reaction 2-dehydro-3-deoxy-D-gluconate = D-glyceraldehyde + pyruvate. In terms of biological role, aldolase which can catalyze in vitro the aldolisation reaction between hydroxypyruvate (HPA) or pyruvate (PA) and D-glyceraldehyde (D-GA). The condensation of pyruvate and D-glyceraldehyde produces 2-dehydro-3-deoxy-L-galactonate as the major product and 2-dehydro-3-deoxy-D-gluconate. Has weak activity with hydroxypyruvate and D-glyceraldehyde. This Agrobacterium fabrum (strain C58 / ATCC 33970) (Agrobacterium tumefaciens (strain C58)) protein is Hydroxypyruvate/pyruvate aldolase.